The primary structure comprises 421 residues: 4-hydroxy-3-methylbut-2-en-1-yl diphosphate synthase (flavodoxin) (421 aa).

[4Fe-4S] cluster contacts are provided by cysteine 300, cysteine 303, cysteine 346, and glutamate 353.

Belongs to the IspG family. [4Fe-4S] cluster is required as a cofactor.

It carries out the reaction (2E)-4-hydroxy-3-methylbut-2-enyl diphosphate + oxidized [flavodoxin] + H2O + 2 H(+) = 2-C-methyl-D-erythritol 2,4-cyclic diphosphate + reduced [flavodoxin]. The protein operates within isoprenoid biosynthesis; isopentenyl diphosphate biosynthesis via DXP pathway; isopentenyl diphosphate from 1-deoxy-D-xylulose 5-phosphate: step 5/6. Its function is as follows. Converts 2C-methyl-D-erythritol 2,4-cyclodiphosphate (ME-2,4cPP) into 1-hydroxy-2-methyl-2-(E)-butenyl 4-diphosphate. In Laribacter hongkongensis (strain HLHK9), this protein is 4-hydroxy-3-methylbut-2-en-1-yl diphosphate synthase (flavodoxin).